Consider the following 438-residue polypeptide: Carboxypeptidase A6 (438 aa).

Residues 1 to 30 (MNFLGNPRSHTAAFLPVCWLLLNILKPGHC) form the signal peptide. Residues 31–129 (HSYDNRYAGD…NSLQTQRNRR (99 aa)) constitute a propeptide, activation peptide. Asparagine 89 and asparagine 153 each carry an N-linked (GlcNAc...) asparagine glycan. The Peptidase M14 domain maps to 138–433 (VYHSLEDIQS…LAVKNITMHL (296 aa)). Residues histidine 197 and glutamate 200 each contribute to the Zn(2+) site. Substrate-binding positions include 197–200 (HARE), arginine 255, and 272–273 (NR). Residues cysteine 266 and cysteine 289 are joined by a disulfide bond. Position 325 (histidine 325) interacts with Zn(2+). 326-327 (AY) contacts substrate. Asparagine 344 is a glycosylation site (N-linked (GlcNAc...) asparagine). Tyrosine 377 provides a ligand contact to substrate. Glutamate 399 (proton donor/acceptor) is an active-site residue. N-linked (GlcNAc...) asparagine glycosylation occurs at asparagine 428.

This sequence belongs to the peptidase M14 family. Zn(2+) serves as cofactor. In brain, highly expressed in the olfactory bulb with lower levels in other regions including cerebral cortex, hippocampus, hypothalamus, striatum and medulla. Within the olfactory bulb, highest levels occur in the mitral and granular layers with lower levels in the internal and external plexiform layers. Moderate levels are found in the epididymis with low levels in colon and spleen. Not detected in adrenal, liver, lung, ovary or testis. At embryonic day 14.5, enriched in eye, ear, osteoblasts, stomach, skin, dorsal root ganglia and throughout the CNS.

The protein localises to the secreted. The protein resides in the extracellular space. Its subcellular location is the extracellular matrix. In terms of biological role, may be involved in the proteolytic inactivation of enkephalins and neurotensin in some brain areas. May convert inactive angiotensin I into the biologically active angiotensin II. Releases a C-terminal amino acid, with preference for large hydrophobic C-terminal amino acids and shows only very weak activity toward small amino acids and histidine. This is Carboxypeptidase A6 (Cpa6) from Mus musculus (Mouse).